Here is a 348-residue protein sequence, read N- to C-terminus: Phenylalanine--tRNA ligase alpha subunit (348 aa).

Glu-268 contacts Mg(2+).

It belongs to the class-II aminoacyl-tRNA synthetase family. Phe-tRNA synthetase alpha subunit type 1 subfamily. Tetramer of two alpha and two beta subunits. The cofactor is Mg(2+).

It is found in the cytoplasm. The enzyme catalyses tRNA(Phe) + L-phenylalanine + ATP = L-phenylalanyl-tRNA(Phe) + AMP + diphosphate + H(+). In Bordetella bronchiseptica (strain ATCC BAA-588 / NCTC 13252 / RB50) (Alcaligenes bronchisepticus), this protein is Phenylalanine--tRNA ligase alpha subunit.